The following is a 299-amino-acid chain: Taste receptor type 2 member 4 (299 aa).

The Extracellular portion of the chain corresponds to 1-9 (MLRLFYFSA). Residues 10-30 (VIASVILNFVGIIMNLFITVV) traverse the membrane as a helical segment. Residues 31–46 (NCKTWVKSHRISSSDR) lie on the Cytoplasmic side of the membrane. The helical transmembrane segment at 47–67 (ILFSLGITRFLMLGLFLVNTI) threads the bilayer. At 68–81 (YFVSSNMERSVYLS) the chain is on the extracellular side. The chain crosses the membrane as a helical span at residues 82–102 (AFFVLCFMFLDSSSLWFVTLL). At 103–131 (NILYCVKITNFQHSVFLLLKRSISPKIPR) the chain is on the cytoplasmic side. A helical transmembrane segment spans residues 132 to 152 (LLLAFVLISAFTTCLYITLSQ). Topologically, residues 153–172 (ASPFPELVTTRNNTSFNISE) are extracellular. Asn-164, Asn-165, and Asn-169 each carry an N-linked (GlcNAc...) asparagine glycan. Residues 173 to 193 (GILSLVVSLVLSSSLQFIINV) traverse the membrane as a helical segment. Topologically, residues 194-230 (TSASLLIHSLRRHIQKMQKNATGFWNPQMEAHVGAMK) are cytoplasmic. Residues 231–251 (LMVYFLILYIPYSVATLVQYL) traverse the membrane as a helical segment. The Extracellular portion of the chain corresponds to 252–262 (PFYAGMDMGTK). The helical transmembrane segment at 263-283 (SICLIFATLYSPGHSVLIIIT) threads the bilayer. The Cytoplasmic segment spans residues 284 to 299 (HPKLKTTAKKILCFKK).

The protein belongs to the G-protein coupled receptor T2R family.

Its subcellular location is the membrane. The protein resides in the cell projection. It localises to the cilium membrane. Its function is as follows. Gustducin-coupled receptor implicated in the perception of bitter compounds in the oral cavity and the gastrointestinal tract. Signals through PLCB2 and the calcium-regulated cation channel TRPM5. In airway epithelial cells, binding of denatonium increases the intracellular calcium ion concentration and stimulates ciliary beat frequency. This is Taste receptor type 2 member 4 (TAS2R4) from Gorilla gorilla gorilla (Western lowland gorilla).